The following is a 102-amino-acid chain: uncharacterized protein (102 aa).

Positions 77–102 (RKDGDEKSKPNSKDYASRPIRDHSKI) are disordered.

This is an uncharacterized protein from Microplitis demolitor (Parasitoid wasp).